A 267-amino-acid polypeptide reads, in one-letter code: Probable tetrahydroxynaphthalene reductase MYCGRDRAFT_87994 (267 aa).

The NADP(+) site is built by isoleucine 26, aspartate 72, asparagine 99, and arginine 132. Serine 149 acts as the Proton donor in catalysis. The NADP(+) site is built by tyrosine 163, lysine 167, isoleucine 196, and threonine 198. Residue tyrosine 163 is the Proton acceptor of the active site. Catalysis depends on lysine 167, which acts as the Lowers pKa of active site Tyr.

This sequence belongs to the short-chain dehydrogenases/reductases (SDR) family. As to quaternary structure, homotetramer.

The enzyme catalyses scytalone + NADP(+) = naphthalene-1,3,6,8-tetrol + NADPH + H(+). It participates in pigment biosynthesis; melanin biosynthesis. In terms of biological role, probable tetrahydroxynaphthalene reductase; part of the gene cluster 29 that mediates the biosynthesis dihydroxynaphthalene (DHN)-melanin, a bluish-green pigment and a structural component of the conidial wall. Catalyzes the NADPH-dependent reduction of 1,3,6,8-tetrahydroxynaphthalene (T4HN) into (+)-scytalone. In Zymoseptoria tritici (strain CBS 115943 / IPO323) (Speckled leaf blotch fungus), this protein is Probable tetrahydroxynaphthalene reductase MYCGRDRAFT_87994.